The chain runs to 1536 residues: Alpha-2-macroglobulin (1536 aa).

Positions Met1 to Ala23 are cleaved as a signal peptide. Residues Cys919–Gln922 constitute a cross-link (isoglutamyl cysteine thioester (Cys-Gln)).

This sequence belongs to the protease inhibitor I39 (alpha-2-macroglobulin) family. Bacterial alpha-2-macroglobulin subfamily.

Protects the bacterial cell from peptidases. The protein is Alpha-2-macroglobulin of Thermotoga maritima (strain ATCC 43589 / DSM 3109 / JCM 10099 / NBRC 100826 / MSB8).